A 122-amino-acid chain; its full sequence is Small ribosomal subunit protein bS6 (122 aa).

This sequence belongs to the bacterial ribosomal protein bS6 family.

In terms of biological role, binds together with bS18 to 16S ribosomal RNA. The protein is Small ribosomal subunit protein bS6 (rpsF) of Neisseria meningitidis serogroup B (strain ATCC BAA-335 / MC58).